Reading from the N-terminus, the 658-residue chain is Putative endo-beta-N-acetylglucosaminidase (658 aa).

Residues 1–23 (MKKVRFIFLALLFFLASPEGAMA) form the signal peptide. Cell wall-binding repeat units follow at residues 42-63 (ANEWVFDTHYQSWFYIKADANY), 65-84 (ENEWLKQGDDYFYLKSGGYM), 86-105 (KSEWVEDKGAFYYLDQDGKM), 124-145 (IEDWVYDSQYDAWFYIKADGQH), 147-166 (EKEWLQIKGKDYYFKSGGYL), 185-206 (QQGWLFDKQYQSWFYIKENGNY), 208-227 (DKEWIFENGHYYYLKSGGYM), 229-248 (ANEWIWDKESWFYLKFDGKM), 250-271 (EKEWVYDSHSQAWYYFKSGGYM), 273-292 (ANEWIWDKESWFYLKSDGKI), 294-315 (EKEWVYDSHSQAWYYFKSGGYM), 317-336 (ANEWIWDKESWFYLKSDGKI), and 338-359 (EKEWVYDSHSQAWYYFKSGGYM).

Belongs to the glycosyl hydrolase 73 family.

It localises to the secreted. The catalysed reaction is an N(4)-(oligosaccharide-(1-&gt;3)-[oligosaccharide-(1-&gt;6)]-beta-D-Man-(1-&gt;4)-beta-D-GlcNAc-(1-&gt;4)-alpha-D-GlcNAc)-L-asparaginyl-[protein] + H2O = an oligosaccharide-(1-&gt;3)-[oligosaccharide-(1-&gt;6)]-beta-D-Man-(1-&gt;4)-D-GlcNAc + N(4)-(N-acetyl-beta-D-glucosaminyl)-L-asparaginyl-[protein]. In terms of biological role, plays an important role in cell wall degradation and cell separation. The sequence is that of Putative endo-beta-N-acetylglucosaminidase (lytB) from Streptococcus pneumoniae serotype 4 (strain ATCC BAA-334 / TIGR4).